We begin with the raw amino-acid sequence, 244 residues long: MSQLDLNALNELPKVDRVLALAETNAQLETLTAEERVAWALENLPGEYVLSSSFGIQAAVSLHLVNQIRPDIPVILTDTGYLFPETYQFIDELTDKLKLNLKVYRAGESPAWQEARYGKLWEQGVEGIEKYNEINKVEPMNRALKELKAQTWFAGLRREQSGSRAHLPVLAIQRGVFKVLPIIDWDNRTVYQYLQKHGLKYHPLWDQGYLSVGDTHTTRKWEPGMAEEETRFFGLKRECGLHEG.

Cysteine 239 (nucleophile; cysteine thiosulfonate intermediate) is an active-site residue.

The protein belongs to the PAPS reductase family. CysH subfamily.

It is found in the cytoplasm. The catalysed reaction is [thioredoxin]-disulfide + sulfite + adenosine 3',5'-bisphosphate + 2 H(+) = [thioredoxin]-dithiol + 3'-phosphoadenylyl sulfate. It participates in sulfur metabolism; hydrogen sulfide biosynthesis; sulfite from sulfate: step 3/3. In terms of biological role, catalyzes the formation of sulfite from phosphoadenosine 5'-phosphosulfate (PAPS) using thioredoxin as an electron donor. In Salmonella heidelberg (strain SL476), this protein is Phosphoadenosine 5'-phosphosulfate reductase.